Here is a 245-residue protein sequence, read N- to C-terminus: tRNA pseudouridine synthase A (245 aa).

The Nucleophile role is filled by D52. Y111 is a substrate binding site.

It belongs to the tRNA pseudouridine synthase TruA family. Homodimer.

It catalyses the reaction uridine(38/39/40) in tRNA = pseudouridine(38/39/40) in tRNA. Its function is as follows. Formation of pseudouridine at positions 38, 39 and 40 in the anticodon stem and loop of transfer RNAs. The chain is tRNA pseudouridine synthase A from Rickettsia peacockii (strain Rustic).